A 131-amino-acid polypeptide reads, in one-letter code: Large ribosomal subunit protein bL17 (131 aa).

It belongs to the bacterial ribosomal protein bL17 family. Part of the 50S ribosomal subunit. Contacts protein L32.

The protein is Large ribosomal subunit protein bL17 of Paraburkholderia phymatum (strain DSM 17167 / CIP 108236 / LMG 21445 / STM815) (Burkholderia phymatum).